A 978-amino-acid chain; its full sequence is Glycine dehydrogenase (decarboxylating) (978 aa).

K726 bears the N6-(pyridoxal phosphate)lysine mark.

Belongs to the GcvP family. The glycine cleavage system is composed of four proteins: P, T, L and H. Pyridoxal 5'-phosphate serves as cofactor.

The catalysed reaction is N(6)-[(R)-lipoyl]-L-lysyl-[glycine-cleavage complex H protein] + glycine + H(+) = N(6)-[(R)-S(8)-aminomethyldihydrolipoyl]-L-lysyl-[glycine-cleavage complex H protein] + CO2. Its function is as follows. The glycine cleavage system catalyzes the degradation of glycine. The P protein binds the alpha-amino group of glycine through its pyridoxal phosphate cofactor; CO(2) is released and the remaining methylamine moiety is then transferred to the lipoamide cofactor of the H protein. The protein is Glycine dehydrogenase (decarboxylating) of Paraburkholderia xenovorans (strain LB400).